The chain runs to 285 residues: Protoheme IX farnesyltransferase (285 aa).

The next 9 membrane-spanning stretches (helical) occupy residues 8–28, 36–56, 80–100, 107–127, 133–153, 163–183, 209–229, 232–252, and 265–285; these read ITKPGIIIGNSTLITGGFLFA, YVLFIYTILGASLVIASACVF, LLPVFSVFNFAIFLGVLGLSI, FISMSLAVFGFFIYVVLYTMF, FYSTFIGSFSGSTPSVIGYTA, ILLFVIVIFWQMSHFYSISIM, IFFYVLNFSFFSSLFTFLGYL, NFLLLSSIVNFYWSFLSYSNI, and FYFSIIVIVFFNFLISIDVFF.

The protein belongs to the UbiA prenyltransferase family. Protoheme IX farnesyltransferase subfamily.

Its subcellular location is the cell membrane. It catalyses the reaction heme b + (2E,6E)-farnesyl diphosphate + H2O = Fe(II)-heme o + diphosphate. The protein operates within porphyrin-containing compound metabolism; heme O biosynthesis; heme O from protoheme: step 1/1. In terms of biological role, converts heme B (protoheme IX) to heme O by substitution of the vinyl group on carbon 2 of heme B porphyrin ring with a hydroxyethyl farnesyl side group. The sequence is that of Protoheme IX farnesyltransferase from Buchnera aphidicola subsp. Acyrthosiphon pisum (strain Tuc7).